We begin with the raw amino-acid sequence, 251 residues long: MDKVIARPYKRPNALCRLICFPWAGGNCSFFIRWCEAFSSIIVVSVIRLAGRECRDTEPFPEDMAEVVNEITNALLKDLQEKPFALFGHSFGSFVSYALAVHLKEKHGLEPVHMFFSGSYGPHSEYFHLMYKLPEVEDSRLLELIHTLGGTPPEFLQNEQITKHLLRVLKEDQKVLVTYPWHDVRKKYFSCDLTCFNGSDEKNHGSEAWIAITSGDTSIYSLPGNHFYLMEPSNETFLIKYITKCIENSDI.

Catalysis depends on residues serine 90 and histidine 226.

Belongs to the thioesterase family.

It catalyses the reaction (9Z)-octadecenoyl-[ACP] + H2O = (9Z)-octadecenoate + holo-[ACP] + H(+). Functionally, in fatty acid biosynthesis chain termination and release of the free fatty acid product is achieved by hydrolysis of the thio ester by a thioesterase I, a component of the fatty acid synthetase complex. The chain length of the released fatty acid is usually C16. However, in the mammary glands of non-ruminant mammals, and in the uropygial gland of certain waterfowl there exists a second thioesterase which releases medium-chain length fatty acids (C8 to C2). The chain is S-acyl fatty acid synthase thioesterase, medium chain from Anas platyrhynchos (Mallard).